A 224-amino-acid chain; its full sequence is uncharacterized protein (224 aa).

The tract at residues 128 to 224 (VPSVQLHQIP…TNKRKKRLQF (97 aa)) is disordered. Residues 129–138 (PSVQLHQIPT) are compositionally biased toward polar residues. The span at 139–156 (RSRRSSKPRKPRKKRKER) shows a compositional bias: basic residues. Basic and acidic residues predominate over residues 167–182 (LLREMDRLMTKQRDAL). The span at 185 to 195 (SESSSYFSSDS) shows a compositional bias: low complexity.

This is an uncharacterized protein from Torque teno sus virus 1 (isolate Sd-TTV31).